A 280-amino-acid chain; its full sequence is Undecaprenyl-diphosphatase (280 aa).

8 helical membrane passes run 3 to 23, 45 to 65, 88 to 108, 115 to 135, 150 to 170, 191 to 211, 225 to 245, and 255 to 275; these read IILL…EFLP, VDLF…YDYW, QLGL…FTFA, LFDP…IFYV, VGLK…IPGT, AEFS…LDLL, VLGI…RLLV, and IFAW…WGFG.

It belongs to the UppP family.

The protein localises to the cell inner membrane. It catalyses the reaction di-trans,octa-cis-undecaprenyl diphosphate + H2O = di-trans,octa-cis-undecaprenyl phosphate + phosphate + H(+). In terms of biological role, catalyzes the dephosphorylation of undecaprenyl diphosphate (UPP). Confers resistance to bacitracin. In Psychrobacter arcticus (strain DSM 17307 / VKM B-2377 / 273-4), this protein is Undecaprenyl-diphosphatase.